Here is a 542-residue protein sequence, read N- to C-terminus: Chaperonin GroEL 2 (542 aa).

ATP-binding positions include 30–33 (TLGP), K51, 87–91 (DGTTT), G415, and D496.

This sequence belongs to the chaperonin (HSP60) family. Forms a cylinder of 14 subunits composed of two heptameric rings stacked back-to-back. Interacts with the co-chaperonin GroES.

It localises to the cytoplasm. The enzyme catalyses ATP + H2O + a folded polypeptide = ADP + phosphate + an unfolded polypeptide.. In terms of biological role, together with its co-chaperonin GroES, plays an essential role in assisting protein folding. The GroEL-GroES system forms a nano-cage that allows encapsulation of the non-native substrate proteins and provides a physical environment optimized to promote and accelerate protein folding. This is Chaperonin GroEL 2 from Cereibacter sphaeroides (strain ATCC 17023 / DSM 158 / JCM 6121 / CCUG 31486 / LMG 2827 / NBRC 12203 / NCIMB 8253 / ATH 2.4.1.) (Rhodobacter sphaeroides).